We begin with the raw amino-acid sequence, 321 residues long: Acetyl-coenzyme A carboxylase carboxyl transferase subunit alpha (321 aa).

Residues 39–293 form the CoA carboxyltransferase C-terminal domain; sequence RLQQKSQNLA…RRALGDALRQ (255 aa).

This sequence belongs to the AccA family. As to quaternary structure, acetyl-CoA carboxylase is a heterohexamer composed of biotin carboxyl carrier protein (AccB), biotin carboxylase (AccC) and two subunits each of ACCase subunit alpha (AccA) and ACCase subunit beta (AccD).

The protein localises to the cytoplasm. The enzyme catalyses N(6)-carboxybiotinyl-L-lysyl-[protein] + acetyl-CoA = N(6)-biotinyl-L-lysyl-[protein] + malonyl-CoA. Its pathway is lipid metabolism; malonyl-CoA biosynthesis; malonyl-CoA from acetyl-CoA: step 1/1. Component of the acetyl coenzyme A carboxylase (ACC) complex. First, biotin carboxylase catalyzes the carboxylation of biotin on its carrier protein (BCCP) and then the CO(2) group is transferred by the carboxyltransferase to acetyl-CoA to form malonyl-CoA. This chain is Acetyl-coenzyme A carboxylase carboxyl transferase subunit alpha, found in Bordetella bronchiseptica (strain ATCC BAA-588 / NCTC 13252 / RB50) (Alcaligenes bronchisepticus).